The chain runs to 558 residues: Factor VII-activating protease (558 aa).

The first 23 residues, 1–23 (MFARMSDLHVLLLMVLAGKTAFG), serve as a signal peptide directing secretion. Residue Asn54 is glycosylated (N-linked (GlcNAc...) asparagine). 3 EGF-like domains span residues 71 to 107 (EDDP…NRCQ), 109 to 146 (VQNK…SDCS), and 148 to 186 (VVPV…KLCE). Intrachain disulfides connect Cys75–Cys86, Cys80–Cys95, Cys97–Cys106, Cys113–Cys123, Cys118–Cys134, Cys136–Cys145, Cys152–Cys163, Cys157–Cys174, Cys176–Cys185, Cys192–Cys274, Cys213–Cys255, Cys244–Cys269, Cys299–Cys433, Cys345–Cys361, Cys353–Cys422, Cys445–Cys513, Cys475–Cys491, and Cys503–Cys531. Positions 191-274 (DCYVDDGYSY…KWEYCDVPAC (84 aa)) constitute a Kringle domain. In terms of domain architecture, Peptidase S1 spans 312 to 553 (IFGGFKSTAG…FLTWIKATME (242 aa)). Residues His360 and Asp409 each act as charge relay system in the active site. The active-site Charge relay system is the Ser507.

Belongs to the peptidase S1 family. In terms of assembly, heterodimer; disulfide-linked. Heterodimer of a 50 kDa heavy and a 27 kDa light chain linked by a disulfide bond. Proteolytic cleavage at Gly-23 or Leu-27 can give rise to the 50 kDa heavy chain (HC) and cleavage at Arg-311 or Lys-317 can give rise to the 27 kDa light chain (LC). The HC can undergo further proteolytic cleavage giving rise to a 26 kDa fragment. The LC can undergo further proteolytic cleavage at Arg-311 leading to a 17-kDa fragment and at Arg-478 leading to a 8-kDa fragment.

The protein localises to the secreted. Cleaves the alpha-chain at multiple sites and the beta-chain between 'Lys-53' and 'Lys-54' but not the gamma-chain of fibrinogen and therefore does not initiate the formation of the fibrin clot and does not cause the fibrinolysis directly. It does not cleave (activate) prothrombin and plasminogen but converts the inactive single chain urinary plasminogen activator (pro-urokinase) to the active two chain form. Activates coagulation factor VII. May function as a tumor suppressor negatively regulating cell proliferation and cell migration. This Bos taurus (Bovine) protein is Factor VII-activating protease (HABP2).